We begin with the raw amino-acid sequence, 106 residues long: Small ribosomal subunit protein bS18 (106 aa).

Positions 1–22 (MSEETTVRPERTERSERPERPQ) are enriched in basic and acidic residues. The segment at 1–34 (MSEETTVRPERTERSERPERPQYRGNGPRKRRPF) is disordered.

This sequence belongs to the bacterial ribosomal protein bS18 family. In terms of assembly, part of the 30S ribosomal subunit. Forms a tight heterodimer with protein bS6.

Its function is as follows. Binds as a heterodimer with protein bS6 to the central domain of the 16S rRNA, where it helps stabilize the platform of the 30S subunit. This chain is Small ribosomal subunit protein bS18, found in Geobacter metallireducens (strain ATCC 53774 / DSM 7210 / GS-15).